We begin with the raw amino-acid sequence, 349 residues long: Transmembrane protein 59-like (349 aa).

An N-terminal signal peptide occupies residues 1-22; it reads MDSVALMPLLLLLLLQPPPATP. Residue asparagine 100 is glycosylated (N-linked (GlcNAc...) asparagine). The helical transmembrane segment at 276 to 296 threads the bilayer; that stretch reads ILACCLFLSVLVMLWLSCSTL. The Microbody targeting signal signature appears at 347–349; it reads TKL.

Belongs to the TMEM59 family.

The protein localises to the golgi apparatus membrane. In terms of biological role, modulates the O-glycosylation and complex N-glycosylation steps occurring during the Golgi maturation of APP. Inhibits APP transport to the cell surface and further shedding. In Bos taurus (Bovine), this protein is Transmembrane protein 59-like (TMEM59L).